Here is an 862-residue protein sequence, read N- to C-terminus: DNA mismatch repair protein MutS (862 aa).

Residue Gly-603–Ser-610 coordinates ATP.

Belongs to the DNA mismatch repair MutS family.

Its function is as follows. This protein is involved in the repair of mismatches in DNA. It is possible that it carries out the mismatch recognition step. This protein has a weak ATPase activity. This Bacillus velezensis (strain DSM 23117 / BGSC 10A6 / LMG 26770 / FZB42) (Bacillus amyloliquefaciens subsp. plantarum) protein is DNA mismatch repair protein MutS.